We begin with the raw amino-acid sequence, 261 residues long: Indole-3-glycerol phosphate synthase (261 aa).

This sequence belongs to the TrpC family.

The catalysed reaction is 1-(2-carboxyphenylamino)-1-deoxy-D-ribulose 5-phosphate + H(+) = (1S,2R)-1-C-(indol-3-yl)glycerol 3-phosphate + CO2 + H2O. Its pathway is amino-acid biosynthesis; L-tryptophan biosynthesis; L-tryptophan from chorismate: step 4/5. The polypeptide is Indole-3-glycerol phosphate synthase (Paraburkholderia phytofirmans (strain DSM 17436 / LMG 22146 / PsJN) (Burkholderia phytofirmans)).